A 321-amino-acid chain; its full sequence is Fructose-1,6-bisphosphatase class 1 (321 aa).

Mg(2+) contacts are provided by glutamate 93, aspartate 114, leucine 116, and aspartate 117. Residues 117 to 120 (DGSS), asparagine 205, tyrosine 233, and lysine 263 each bind substrate. Glutamate 269 contributes to the Mg(2+) binding site.

It belongs to the FBPase class 1 family. In terms of assembly, homotetramer. Mg(2+) serves as cofactor.

The protein resides in the cytoplasm. It carries out the reaction beta-D-fructose 1,6-bisphosphate + H2O = beta-D-fructose 6-phosphate + phosphate. The protein operates within carbohydrate biosynthesis; gluconeogenesis. In Persephonella marina (strain DSM 14350 / EX-H1), this protein is Fructose-1,6-bisphosphatase class 1.